Reading from the N-terminus, the 998-residue chain is Kinesin-like protein KIF19 (998 aa).

A Kinesin motor domain is found at 11-346 (QLMVALRVRP…LTYAGRAKNI (336 aa)). Residue 104–111 (GPTGCGKT) coordinates ATP. Coiled coils occupy residues 360-391 (HIAQ…RGQA) and 424-452 (EQLA…EVQI). Residues 482 to 494 (ECYAKDDSEKDSD) are compositionally biased toward basic and acidic residues. Residues 482 to 503 (ECYAKDDSEKDSDTGDDQPDIL) are disordered. A coiled-coil region spans residues 507-552 (EVAAARESIAALVDEQKQLRKQKLALEQRCRELRARGRRLEETLPR). 4 stretches are compositionally biased toward polar residues: residues 662–676 (SSLP…SLTP), 684–697 (KTLS…QNSA), 746–761 (SLGS…SENL), and 836–852 (TLQH…STGE). Disordered regions lie at residues 662-706 (SSLP…TESE), 746-765 (SLGS…SEIP), 794-911 (GTEG…THLL), and 948-998 (KLPP…SRHN). Residues 989–998 (HGKDGCSRHN) show a composition bias toward basic and acidic residues.

The protein belongs to the TRAFAC class myosin-kinesin ATPase superfamily. Kinesin family.

The protein resides in the cytoplasm. It localises to the cytoskeleton. Its subcellular location is the cell projection. The protein localises to the cilium. Functionally, plus end-directed microtubule-dependent motor protein that regulates the length of motile cilia by mediating depolymerization of microtubules at ciliary tips. The polypeptide is Kinesin-like protein KIF19 (KIF19) (Homo sapiens (Human)).